We begin with the raw amino-acid sequence, 333 residues long: Adenosine deaminase (333 aa).

Residues His-12 and His-14 each coordinate Zn(2+). Substrate contacts are provided by His-14, Asp-16, and Gly-170. Residue His-197 participates in Zn(2+) binding. The active-site Proton donor is Glu-200. Asp-278 contacts Zn(2+). A substrate-binding site is contributed by Asp-279.

This sequence belongs to the metallo-dependent hydrolases superfamily. Adenosine and AMP deaminases family. Adenosine deaminase subfamily. The cofactor is Zn(2+).

It carries out the reaction adenosine + H2O + H(+) = inosine + NH4(+). The catalysed reaction is 2'-deoxyadenosine + H2O + H(+) = 2'-deoxyinosine + NH4(+). Its function is as follows. Catalyzes the hydrolytic deamination of adenosine and 2-deoxyadenosine. The sequence is that of Adenosine deaminase from Aliivibrio fischeri (strain MJ11) (Vibrio fischeri).